A 585-amino-acid chain; its full sequence is MGRKLLGLLMLAVLLAGCAGVPSSSAPQAIGTVERPAPSNLPKPTPGMDPEVLLREFLKATADPANRHLAARQFLTQSASNAWDDAGSALLIDHVVFVETRAAERVSATMRADILGSLSDMGVFETAEGVLPDPGPIELVKTSGGWRIDRLPNGVFLDWQQFQATYKRNTLYFADPTGKTVVPDPRYVAVPDHDQLATELVSKLIAGPRPEMAHTVRNLLAPPLRLRGPVTRADGGKSGIGRGYGGARIDLEKLSTTDPHSRQLVAAQIIWTLARADIRGPYVINADGAPLDDRFRDGWTTSDVAATDPGVADGAGAGLHALVNGSLVSLDGQHTVVVPGAFGRMGDQTGAALSRNGRQVASVVTLHRGAPDMAASLWIGDLGAEAVQSADGHSLSRPTWSLDDVVWVVVDGNNVLRAIQEPASGQPARLPVDSVAVATRFPGPITDLQLSRDSTRAAMVIGGQVILASVEQTQAGQYALTYPRRLGFGLGNSVVSLSWRTGDDIVVTRTDSSHPVSYVNLDGVNSDAPPHGVQMPVTTVVANPSTAYVAGPQGVLQYSPSADGQQGWSEVPGLTVPGAAPVLPG.

The signal sequence occupies residues 1–17 (MGRKLLGLLMLAVLLAG). Cys-18 carries N-palmitoyl cysteine lipidation. The S-diacylglycerol cysteine moiety is linked to residue Cys-18. 2 disordered regions span residues 24–46 (SSAP…KPTP) and 560–585 (PSAD…VLPG).

Belongs to the LpqB lipoprotein family.

Its subcellular location is the cell membrane. The polypeptide is Lipoprotein LpqB (Mycobacterium paratuberculosis).